We begin with the raw amino-acid sequence, 976 residues long: Receptor-like protein 14 (976 aa).

The first 26 residues, 1-26, serve as a signal peptide directing secretion; the sequence is MERKVFSGQNLIWVMLLLVQLRGYKC. Over 27–928 the chain is Extracellular; it reads CIEKERKALL…DDDDEAAIDM (902 aa). N60, N75, N98, N112, N151, N185, and N200 each carry an N-linked (GlcNAc...) asparagine glycan. LRR repeat units lie at residues 105 to 127, 137 to 160, 162 to 185, 186 to 209, 210 to 233, 234 to 258, 260 to 283, 284 to 306, 308 to 331, 333 to 358, 359 to 381, 382 to 405, 407 to 428, 429 to 452, 454 to 477, 478 to 501, and 503 to 528; these read FEEL…LFDD, LRNL…FLNA, TSLT…ELKN, LTKL…FTHL, EKLK…ELKV, LTNL…VFCE, KNLR…LGNL, NKLR…SFNS, ESLE…PLAN, TKLK…WLPK, FQLT…LVYQ, TNLR…LLEN, PELK…PTIV, HKLQ…IGHV, PRLL…MGEM, NDIS…LLTG, and FSLI…RLTS. N331 carries N-linked (GlcNAc...) asparagine glycosylation. N416 carries an N-linked (GlcNAc...) asparagine glycan. N-linked (GlcNAc...) asparagine glycans are attached at residues N460 and N489. The stretch at 530–549 is one LRR 18; degenerate repeat; that stretch reads IVLRMHNNLFTGEIGVGLRT. LRR repeat units follow at residues 550-573, 575-599, 600-623, 625-645, 646-669, 671-692, 693-715, 782-805, 806-829, 831-854, and 856-879; these read LVNL…SIPP, SSHL…LLAI, HHLN…VVNS, YGIK…VTLL, ENAY…VNTG, MITL…LCDL, TSIR…CLNH, LDYM…ELGD, LSKL…NFSK, KDIE…LTNL, and SLAV…QFNT. The N-linked (GlcNAc...) asparagine glycan is linked to N552. Residue N633 is glycosylated (N-linked (GlcNAc...) asparagine). N680 carries N-linked (GlcNAc...) asparagine glycosylation. N-linked (GlcNAc...) asparagine glycosylation is found at N813, N826, N853, N861, and N866. Residues 897–922 form a disordered region; the sequence is DRSCEGKKNTKEADNGGEEEEEDDDD. Over residues 898 to 910 the composition is skewed to basic and acidic residues; it reads RSCEGKKNTKEAD. The span at 911–922 shows a compositional bias: acidic residues; it reads NGGEEEEEDDDD. A helical transmembrane segment spans residues 929-949; the sequence is VVLYWTTGSTYAIALIGILVL. Residues 950 to 976 lie on the Cytoplasmic side of the membrane; the sequence is MCFDCPWRRTWLCIVDAFIASGKSMFS.

Belongs to the RLP family.

The protein resides in the cell membrane. This is Receptor-like protein 14 from Arabidopsis thaliana (Mouse-ear cress).